The sequence spans 1010 residues: PHD finger protein 20 (1010 aa).

Tudor domains are found at residues 4–69 (HPPN…RPLE) and 83–147 (GSSE…GNAR). Disordered stretches follow at residues 142–373 (IVGN…EGQL) and 483–609 (EKSP…GKLK). Basic and acidic residues predominate over residues 147–246 (RPKETDHKSL…VEKKPEKDLV (100 aa)). Residue S159 is modified to Phosphoserine. Positions 257–269 (KRKRGRPPSITPT) form a DNA-binding region, a.T hook. The span at 267–280 (TPTAVDSNSQTLQP) shows a compositional bias: polar residues. 3 stretches are compositionally biased toward basic and acidic residues: residues 292–325 (KRSD…DLSR), 483–493 (EKSPEPEEGPG), and 525–541 (AKEK…ELVR). The segment at 455–485 (FRCKVLDCLKFFRKAKLLHYHMKYFHGMEKS) adopts a C2H2-type zinc-finger fold. Basic residues predominate over residues 542–554 (VKPKKKKKKKKKT). The PHD-type zinc finger occupies 657-703 (RCICEVQEENDFMIQCEECQCWQHGVCMGLLEENVPEKYTCYVCQDP). The disordered stretch occupies residues 804–827 (RSEESPSYRTLNGAVEKPSPLPRS). K841 is subject to N6-acetyllysine. S876 and S878 each carry phosphoserine. The disordered stretch occupies residues 877–902 (LSPRLGWPIDQDRSRGDIDPKPSSPK). The segment covering 886–902 (DQDRSRGDIDPKPSSPK) has biased composition (basic and acidic residues).

As to quaternary structure, homodimer; disulfide-linked. Component of some MLL1/MLL complex, at least composed of the core components KMT2A/MLL1, ASH2L, HCFC1, WDR5 and RBBP5, as well as the facultative components BACC1, CHD8, E2F6, HSP70, INO80C, KANSL1, LAS1L, MAX, MCRS1, MGA, MYST1/MOF, PELP1, PHF20, PRP31, RING2, RUVB1/TIP49A, RUVB2/TIP49B, SENP3, TAF1, TAF4, TAF6, TAF7, TAF9 and TEX10. Component of the NSL complex at least composed of MOF/KAT8, KANSL1, KANSL2, KANSL3, MCRS1, PHF20, OGT1/OGT, WDR5 and HCFC1. Ubiquitinated by TRIM26; leading to proteasomal degradation.

It localises to the nucleus. Functionally, contributes to methyllysine-dependent p53/TP53 stabilization and up-regulation after DNA damage. Methyllysine-binding protein, component of the MOF histone acetyltransferase protein complex. Not required for maintaining the global histone H4 'Lys-16' acetylation (H4K16ac) levels or locus specific histone acetylation, but instead works downstream in transcriptional regulation of MOF target genes. As part of the NSL complex it may be involved in acetylation of nucleosomal histone H4 on several lysine residues. The protein is PHD finger protein 20 (Phf20) of Mus musculus (Mouse).